A 402-amino-acid polypeptide reads, in one-letter code: Alanine racemase (402 aa).

Lysine 34 acts as the Proton acceptor; specific for D-alanine in catalysis. An N6-(pyridoxal phosphate)lysine modification is found at lysine 34. Arginine 133 contacts substrate. The 46-residue stretch at 226 to 271 (EVSYNLSYKEKFERNTPALATTVCINKCADVNTRLTYKVPLKGSYR) folds into the RPE1 insert domain. The active-site Proton acceptor; specific for L-alanine is tyrosine 296. Methionine 344 is a binding site for substrate.

The protein belongs to the alanine racemase family. Pyridoxal 5'-phosphate is required as a cofactor.

It catalyses the reaction L-alanine = D-alanine. Its pathway is amino-acid biosynthesis; D-alanine biosynthesis; D-alanine from L-alanine: step 1/1. Catalyzes the interconversion of L-alanine and D-alanine. May also act on other amino acids. This Rickettsia typhi (strain ATCC VR-144 / Wilmington) protein is Alanine racemase (alr).